Reading from the N-terminus, the 316-residue chain is Transcription initiation factor IIB (316 aa).

The TFIIB-type zinc-finger motif lies at P11–G42. Residues C15, H18, C34, and C37 each coordinate Zn(2+). A phosphoserine mark is found at S70, S76, and S92. 2 repeat units span residues M124–K200 and F218–P294. DNA contacts are provided by K152, R154, K189, and K196. The segment at K189 to R193 is core promoter DNA-binding. K238 carries the N6-acetyllysine; by autocatalysis modification. Residues L244–L316 form a necessary for TATA box-bound TBP complex formation region. R248 contributes to the DNA binding site. A core promoter DNA-binding region spans residues S249 to S252. DNA-binding residues include K272, A281, T284, R286, and R290. The core promoter DNA-binding stretch occupies residues V283–R286.

It belongs to the TFIIB family. As to quaternary structure, found in a ternary complex with TATA box-bound TBP. Part of a TFIID-containing RNA polymerase II pre-initiation complex (PIC) that is composed of TBP and at least GTF2A1, GTF2A2, GTF2E1, GTF2E2, GTF2F1, GTF2H2, GTF2H3, GTF2H4, GTF2H5, GTF2B, TCEA1, ERCC2, ERCC3, TAF1, TAF2, TAF3, TAF4, TAF5, TAF6, TAF7, TAF8, TAF9, TAF10, TAF11, TAF12 and TAF13. Associates with TFIID-TFIIA (DA complex) to form TFIID-TFIIA-TFIIB (DAB complex), which is then recognized by RNA polymerase II (Pol II). Found in a RNA polymerase II initiation complex. Interacts (via C-terminus) with TBP; this interaction with TATA box-bound TBP guides Pol II into the PIC. Interacts (via N-terminus) with Pol II. Interacts (via C-terminus) with SSU72; this interaction is inhibited by SYMPK. Interacts with NR2F1; this interaction is direct. Interacts with PGR. Interacts with ESR1. Interacts with GTF2F1 (via C-terminus and preferentially via acetylated form); this interaction prevents binding of GTF2B to GTF2F2. Interacts with GTF2F2 (via N-terminus); this interaction is inhibited in presence of GTF2F1. Interacts with the transcription elongation factor TCEA2. Interacts with HSF1 (via transactivation domain). Interacts with GPBP1. In terms of processing, acetylated. Autoacetylated; autoacetylation at Lys-238 stimulates transcription activation.

Its subcellular location is the nucleus. The protein localises to the chromosome. The enzyme catalyses L-lysyl-[protein] + acetyl-CoA = N(6)-acetyl-L-lysyl-[protein] + CoA + H(+). Its function is as follows. General transcription factor that plays a role in transcription initiation by RNA polymerase II (Pol II). Involved in the pre-initiation complex (PIC) formation and Pol II recruitment at promoter DNA. Together with the TATA box-bound TBP forms the core initiation complex and provides a bridge between TBP and the Pol II-TFIIF complex. Released from the PIC early following the onset of transcription during the initiation and elongation transition and reassociates with TBP during the next transcription cycle. Associates with chromatin to core promoter-specific regions. Binds to two distinct DNA core promoter consensus sequence elements in a TBP-independent manner; these IIB-recognition elements (BREs) are localized immediately upstream (BREu), 5'-[GC][GC][GA]CGCC-3', and downstream (BREd), 5'-[GA]T[TGA][TG][GT][TG][TG]-3', of the TATA box element. Modulates transcription start site selection. Also exhibits autoacetyltransferase activity that contributes to the activated transcription. The protein is Transcription initiation factor IIB of Mus musculus (Mouse).